The primary structure comprises 544 residues: Probable protein kinase UbiB (544 aa).

A Protein kinase domain is found at 123–501 (DFDLVPLASA…KRQQATGKFL (379 aa)). ATP-binding positions include 129 to 137 (LASASIAQV) and Lys-152. The active-site Proton acceptor is the Asp-287. 2 consecutive transmembrane segments (helical) span residues 496–516 (ATGK…AILV) and 519–539 (TYEQ…LFSW).

This sequence belongs to the ABC1 family. UbiB subfamily.

The protein resides in the cell inner membrane. It functions in the pathway cofactor biosynthesis; ubiquinone biosynthesis [regulation]. In terms of biological role, is probably a protein kinase regulator of UbiI activity which is involved in aerobic coenzyme Q (ubiquinone) biosynthesis. In Vibrio vulnificus (strain YJ016), this protein is Probable protein kinase UbiB.